A 320-amino-acid polypeptide reads, in one-letter code: Cytochrome f (320 aa).

Positions 1-35 (MQTRNTLSWIREEITRSISVSLMIYIITWASISSA) are cleaved as a signal peptide. The heme site is built by Tyr-36, Cys-56, Cys-59, and His-60. A helical transmembrane segment spans residues 286-306 (VQGLLFFLGSVVLAQIFLVLK).

The protein belongs to the cytochrome f family. In terms of assembly, the 4 large subunits of the cytochrome b6-f complex are cytochrome b6, subunit IV (17 kDa polypeptide, petD), cytochrome f and the Rieske protein, while the 4 small subunits are PetG, PetL, PetM and PetN. The complex functions as a dimer. The cofactor is heme.

The protein resides in the plastid. The protein localises to the chloroplast thylakoid membrane. In terms of biological role, component of the cytochrome b6-f complex, which mediates electron transfer between photosystem II (PSII) and photosystem I (PSI), cyclic electron flow around PSI, and state transitions. In Olimarabidopsis pumila (Dwarf rocket), this protein is Cytochrome f.